The chain runs to 95 residues: MDFTKEEKLLNAISKVYNEATIDDYPDLKEKLFLYSKEISEGKSVGEVSMKLSSFLGRYILKHKFGLPKSLIELQEIVSKESQVYRGWASIGIWS.

Its function is as follows. Imparts immunity to bacteriocin hiracin-JM79 to naturally sensitive host strains. The polypeptide is Hiracin-JM79 immunity factor (Enterococcus hirae).